A 715-amino-acid polypeptide reads, in one-letter code: MTTTSAFMLNVRLDNVAVVAIDVPGEKVNTLKAEFAAQVRAILKQIRENKALQGVVFISAKADNFIAGADINMIGHCQNAQEAETLARQGQQLMAEIQALPVPVIAAIHGACLGGGLEMALACHRRICTDDVKTVLGLPEVQLGLLPGSGGTQRLPRLVGVSTALDMILTGKQLRARQALKAGLVDDVVPQTILLEAAVELAKKERLAQRTLPVRERILAGPLGRALLFRLVRKKTAQKTQGNYPATERIIDVIETGLAQGSSSGYDAEARAFGELAMTPQSQALRAIFFASTKVKKDPGSDAPPGPLNSVGILGGGLMGGGIAWVTACKGGLPVRIKDINTQGINHALKYSWDLLETKVRRRHIKASERDKQLALISGSTDYRGFSHRDLVIEAVFEDLPLKQQMVAEVEQNCAAHTIFASNTSSLPIGDIAANAARPEQVIGLHFFSPVEKMPLVEVIPHASTSAQTIATTVKLAKKQGKTPIVVSDKAGFYVNRILAPYINEAIRMLTEGERVEHIDAALVKFGFPVGPIQLLDEVGIDTGTKIIPVLEAAYGERFSAPANVVASILNDDRKGRKNGRGFYLYGEKGRKSKKQVDPAIYKLIGVQGQSRLSAQQVAERCVMLMLNEAARCFDEKVIRSARDGDIGAVFGIGFPPFLGGPFRYMDALGPGEMVATLQRLAALYGPRYAPCEQLVRMAERREHFWTNGETDQGN.

The enoyl-CoA hydratase stretch occupies residues 1–190 (MTTTSAFMLN…KAGLVDDVVP (190 aa)). The 3-hydroxyacyl-CoA dehydrogenase stretch occupies residues 306 to 714 (GPLNSVGILG…FWTNGETDQG (409 aa)).

This sequence in the N-terminal section; belongs to the enoyl-CoA hydratase/isomerase family. It in the central section; belongs to the 3-hydroxyacyl-CoA dehydrogenase family. In terms of assembly, heterotetramer of two alpha chains (FadJ) and two beta chains (FadI).

It localises to the cytoplasm. It catalyses the reaction a (3S)-3-hydroxyacyl-CoA = a (2E)-enoyl-CoA + H2O. It carries out the reaction a 4-saturated-(3S)-3-hydroxyacyl-CoA = a (3E)-enoyl-CoA + H2O. The catalysed reaction is a (3S)-3-hydroxyacyl-CoA + NAD(+) = a 3-oxoacyl-CoA + NADH + H(+). The enzyme catalyses (3S)-3-hydroxybutanoyl-CoA = (3R)-3-hydroxybutanoyl-CoA. It participates in lipid metabolism; fatty acid beta-oxidation. Its function is as follows. Catalyzes the formation of a hydroxyacyl-CoA by addition of water on enoyl-CoA. Also exhibits 3-hydroxyacyl-CoA epimerase and 3-hydroxyacyl-CoA dehydrogenase activities. This Salmonella choleraesuis (strain SC-B67) protein is Fatty acid oxidation complex subunit alpha.